Here is a 440-residue protein sequence, read N- to C-terminus: Glutamyl-tRNA(Gln) amidotransferase subunit D (440 aa).

An Asparaginase/glutaminase domain is found at 94 to 424 (PSVTILGTGG…KEVRRMMLTN (331 aa)). Active-site residues include threonine 104, threonine 180, aspartate 181, and lysine 258.

The protein belongs to the asparaginase 1 family. GatD subfamily. As to quaternary structure, heterodimer of GatD and GatE.

The catalysed reaction is L-glutamyl-tRNA(Gln) + L-glutamine + ATP + H2O = L-glutaminyl-tRNA(Gln) + L-glutamate + ADP + phosphate + H(+). Its function is as follows. Allows the formation of correctly charged Gln-tRNA(Gln) through the transamidation of misacylated Glu-tRNA(Gln) in organisms which lack glutaminyl-tRNA synthetase. The reaction takes place in the presence of glutamine and ATP through an activated gamma-phospho-Glu-tRNA(Gln). The GatDE system is specific for glutamate and does not act on aspartate. The sequence is that of Glutamyl-tRNA(Gln) amidotransferase subunit D from Thermococcus kodakarensis (strain ATCC BAA-918 / JCM 12380 / KOD1) (Pyrococcus kodakaraensis (strain KOD1)).